We begin with the raw amino-acid sequence, 198 residues long: Peptidyl-tRNA hydrolase (198 aa).

A tRNA-binding site is contributed by Y15. H20 (proton acceptor) is an active-site residue. Residues F66, N68, and N114 each coordinate tRNA.

Belongs to the PTH family. Monomer.

The protein resides in the cytoplasm. It carries out the reaction an N-acyl-L-alpha-aminoacyl-tRNA + H2O = an N-acyl-L-amino acid + a tRNA + H(+). In terms of biological role, hydrolyzes ribosome-free peptidyl-tRNAs (with 1 or more amino acids incorporated), which drop off the ribosome during protein synthesis, or as a result of ribosome stalling. Catalyzes the release of premature peptidyl moieties from peptidyl-tRNA molecules trapped in stalled 50S ribosomal subunits, and thus maintains levels of free tRNAs and 50S ribosomes. This chain is Peptidyl-tRNA hydrolase, found in Cupriavidus necator (strain ATCC 17699 / DSM 428 / KCTC 22496 / NCIMB 10442 / H16 / Stanier 337) (Ralstonia eutropha).